The following is a 360-amino-acid chain: Membrane-bound lytic murein transglycosylase C (360 aa).

An N-terminal signal peptide occupies residues 1–16 (MKKYLALALIAPLLVS). Cys-17 carries N-palmitoyl cysteine lipidation. Cys-17 carries S-diacylglycerol cysteine lipidation.

Belongs to the transglycosylase Slt family.

It localises to the cell outer membrane. It catalyses the reaction Exolytic cleavage of the (1-&gt;4)-beta-glycosidic linkage between N-acetylmuramic acid (MurNAc) and N-acetylglucosamine (GlcNAc) residues in peptidoglycan, from either the reducing or the non-reducing ends of the peptidoglycan chains, with concomitant formation of a 1,6-anhydrobond in the MurNAc residue.. In terms of biological role, murein-degrading enzyme. May play a role in recycling of muropeptides during cell elongation and/or cell division. The chain is Membrane-bound lytic murein transglycosylase C from Klebsiella pneumoniae (strain 342).